Here is a 396-residue protein sequence, read N- to C-terminus: Purine ribonucleoside efflux pump NepI (396 aa).

The Cytoplasmic portion of the chain corresponds to 1–21 (MSEFIAENRGANAITRPNWSA). The helical transmembrane segment at 22-42 (VFSVAFCVACLIIVEFLPVSL) threads the bilayer. The Periplasmic segment spans residues 43 to 54 (LTPMAQDLGISE). A helical transmembrane segment spans residues 55–75 (GVAGQSVTVTAFVAMFASLFI). The Cytoplasmic portion of the chain corresponds to 76–85 (TQTIQATDRR). Residues 86-106 (YVVILFAVLLTLSCLLVSFAN) form a helical membrane-spanning segment. A topological domain (periplasmic) is located at residue Ser107. A helical transmembrane segment spans residues 108 to 128 (FSLLLIGRACLGLALGGFWAM). At 129–147 (SASLTMRLVPPRTVPKALS) the chain is on the cytoplasmic side. The helical transmembrane segment at 148–168 (VIFGAVSIALVIAAPLGSFLG) threads the bilayer. Over 169–175 (ELIGWRN) the chain is Periplasmic. Residues 176–196 (VFNAAAAMGVLCIFWIIKSLP) traverse the membrane as a helical segment. The Cytoplasmic segment spans residues 197-215 (SLPGEPSHQKQNTFRLLQR). The helical transmembrane segment at 216–236 (PGVMAGMIAIFMSFAGQFAFF) threads the bilayer. Residues 237-255 (TYIRPVYMNLAGFGVDGLT) lie on the Periplasmic side of the membrane. A helical transmembrane segment spans residues 256 to 276 (LVLLSFGIASFVGTSLSSFIL). At 277–281 (KRSVK) the chain is on the cytoplasmic side. The helical transmembrane segment at 282-302 (LALAGAPFVLALSALVLTLWG) threads the bilayer. Over 303–305 (SYK) the chain is Periplasmic. A helical membrane pass occupies residues 306 to 326 (IVATGVAIIWGLTFALIPVGW). Topologically, residues 327–343 (STWITRSLADQAEKAGS) are cytoplasmic. Residues 344–364 (IQVAVIQLANTCGAAIGGYAL) traverse the membrane as a helical segment. Residues 365–366 (DN) lie on the Periplasmic side of the membrane. The helical transmembrane segment at 367 to 387 (IGLTSPLMLSGTLMLLTALLV) threads the bilayer. The Cytoplasmic portion of the chain corresponds to 388–396 (TAKVKMKKS).

Belongs to the major facilitator superfamily. DHA1 family. NepI (TC 2.A.1.2.26) subfamily.

The protein resides in the cell inner membrane. It carries out the reaction inosine(in) + H(+)(out) = inosine(out) + H(+)(in). The enzyme catalyses guanosine(in) + H(+)(out) = guanosine(out) + H(+)(in). Functionally, involved in the efflux of purine ribonucleosides, such as inosine and guanosine. The polypeptide is Purine ribonucleoside efflux pump NepI (Escherichia coli O6:H1 (strain CFT073 / ATCC 700928 / UPEC)).